The following is a 249-amino-acid chain: ATP synthase subunit a, chloroplastic (249 aa).

5 helical membrane passes run 40-60 (QVLI…VLAI), 97-117 (VPFI…GALL), 136-156 (INTT…AGLS), 201-221 (LVVV…VMFL), and 222-242 (GLFT…AYIG).

This sequence belongs to the ATPase A chain family. F-type ATPases have 2 components, CF(1) - the catalytic core - and CF(0) - the membrane proton channel. CF(1) has five subunits: alpha(3), beta(3), gamma(1), delta(1), epsilon(1). CF(0) has four main subunits: a, b, b' and c.

It is found in the plastid. The protein localises to the chloroplast thylakoid membrane. Key component of the proton channel; it plays a direct role in the translocation of protons across the membrane. This chain is ATP synthase subunit a, chloroplastic, found in Nasturtium officinale (Watercress).